The primary structure comprises 168 residues: Large ribosomal subunit protein uL10 (168 aa).

Belongs to the universal ribosomal protein uL10 family. Part of the ribosomal stalk of the 50S ribosomal subunit. The N-terminus interacts with L11 and the large rRNA to form the base of the stalk. The C-terminus forms an elongated spine to which L12 dimers bind in a sequential fashion forming a multimeric L10(L12)X complex.

Forms part of the ribosomal stalk, playing a central role in the interaction of the ribosome with GTP-bound translation factors. The sequence is that of Large ribosomal subunit protein uL10 from Acidovorax ebreus (strain TPSY) (Diaphorobacter sp. (strain TPSY)).